The primary structure comprises 342 residues: MSRQAKDDFLRHYTVSDPRTHPKGYTEYKVTAQFISKKDPEDVKEVVVWKRYSDFRKLHGDLAYTHRNLFRRLEEFPAFPRAQVFGRFEASVIEERRKGAEDLLRFTVHIPALNNSPQLKEFFRGGEVTRPLEVSRDLHILPPPLIPTPPPDDPRLSQLLPAERRGLEELEVPVDPPPSSPAQEALDLLFNCESTEEASGSPARGPLTEAELALFDPFSKEEGAAPSPTHVAELATMEVESARLDQEPWEPGGQEEEEDGEGGPTPAYLSQATELITQALRDEKAGAYAAALQGYRDGVHVLLQGVPSDPLPARQEGVKKKAAEYLKRAEEILRLHLSQLPP.

Positions 1–130 (MSRQAKDDFL…EFFRGGEVTR (130 aa)) constitute a PX domain. A 1,2-diacyl-sn-glycero-3-phospho-(1D-myo-inositol-3-phosphate) contacts are provided by Arg51, Ser53, Arg87, and Arg96. The residue at position 105 (Arg105) is an Omega-N-methylarginine. Ser201 and Ser227 each carry phosphoserine. The tract at residues 245 to 267 (DQEPWEPGGQEEEEDGEGGPTPA) is disordered. In terms of domain architecture, MIT spans 265–342 (TPAYLSQATE…LRLHLSQLPP (78 aa)).

This sequence belongs to the sorting nexin family. Homodimer. Interacts with SNX1, SNX2 and SNX4. As to expression, widely expressed.

Its subcellular location is the cytoplasm. The protein localises to the membrane. It is found in the cytoplasmic vesicle membrane. May be involved in several stages of intracellular trafficking. Overexpression of SNX15 disrupts the normal trafficking of proteins from the plasma membrane to recycling endosomes or the TGN. The sequence is that of Sorting nexin-15 (SNX15) from Homo sapiens (Human).